We begin with the raw amino-acid sequence, 275 residues long: 3-methyl-2-oxobutanoate hydroxymethyltransferase (275 aa).

Mg(2+) contacts are provided by Asp44 and Asp83. Residues 44-45 (DS), Asp83, and Lys113 contribute to the 3-methyl-2-oxobutanoate site. Mg(2+) is bound at residue Glu115. Catalysis depends on Glu182, which acts as the Proton acceptor.

Belongs to the PanB family. In terms of assembly, homodecamer; pentamer of dimers. Requires Mg(2+) as cofactor.

It is found in the cytoplasm. The enzyme catalyses 3-methyl-2-oxobutanoate + (6R)-5,10-methylene-5,6,7,8-tetrahydrofolate + H2O = 2-dehydropantoate + (6S)-5,6,7,8-tetrahydrofolate. It functions in the pathway cofactor biosynthesis; (R)-pantothenate biosynthesis; (R)-pantoate from 3-methyl-2-oxobutanoate: step 1/2. Functionally, catalyzes the reversible reaction in which hydroxymethyl group from 5,10-methylenetetrahydrofolate is transferred onto alpha-ketoisovalerate to form ketopantoate. This Clostridium botulinum (strain 657 / Type Ba4) protein is 3-methyl-2-oxobutanoate hydroxymethyltransferase.